Consider the following 477-residue polypeptide: Methylenetetrahydrofolate--tRNA-(uracil-5-)-methyltransferase TrmFO (477 aa).

15-20 (GAGLAG) provides a ligand contact to FAD.

Belongs to the MnmG family. TrmFO subfamily. Requires FAD as cofactor.

It localises to the cytoplasm. It catalyses the reaction uridine(54) in tRNA + (6R)-5,10-methylene-5,6,7,8-tetrahydrofolate + NADH + H(+) = 5-methyluridine(54) in tRNA + (6S)-5,6,7,8-tetrahydrofolate + NAD(+). The catalysed reaction is uridine(54) in tRNA + (6R)-5,10-methylene-5,6,7,8-tetrahydrofolate + NADPH + H(+) = 5-methyluridine(54) in tRNA + (6S)-5,6,7,8-tetrahydrofolate + NADP(+). Functionally, catalyzes the folate-dependent formation of 5-methyl-uridine at position 54 (M-5-U54) in all tRNAs. The polypeptide is Methylenetetrahydrofolate--tRNA-(uracil-5-)-methyltransferase TrmFO (Rhodopseudomonas palustris (strain BisB5)).